Here is a 504-residue protein sequence, read N- to C-terminus: UDP-N-acetylmuramoylalanine--D-glutamate ligase (504 aa).

Residue 132 to 138 participates in ATP binding; the sequence is GTNGKTT. A compositionally biased stretch (basic and acidic residues) spans 286–295; sequence DRDASDEPAP. Residues 286–305 are disordered; it reads DRDASDEPAPKRRRKNEVAT.

Belongs to the MurCDEF family.

It localises to the cytoplasm. The enzyme catalyses UDP-N-acetyl-alpha-D-muramoyl-L-alanine + D-glutamate + ATP = UDP-N-acetyl-alpha-D-muramoyl-L-alanyl-D-glutamate + ADP + phosphate + H(+). Its pathway is cell wall biogenesis; peptidoglycan biosynthesis. Its function is as follows. Cell wall formation. Catalyzes the addition of glutamate to the nucleotide precursor UDP-N-acetylmuramoyl-L-alanine (UMA). In Paraburkholderia xenovorans (strain LB400), this protein is UDP-N-acetylmuramoylalanine--D-glutamate ligase.